We begin with the raw amino-acid sequence, 454 residues long: Tyrosine aminotransferase (454 aa).

Methionine 1 is subject to N-acetylmethionine. The residue at position 280 (lysine 280) is an N6-(pyridoxal phosphate)lysine. A Phosphoserine modification is found at serine 448.

The protein belongs to the class-I pyridoxal-phosphate-dependent aminotransferase family. In terms of assembly, homodimer. Pyridoxal 5'-phosphate serves as cofactor.

The enzyme catalyses L-tyrosine + 2-oxoglutarate = 3-(4-hydroxyphenyl)pyruvate + L-glutamate. Its pathway is amino-acid degradation; L-phenylalanine degradation; acetoacetate and fumarate from L-phenylalanine: step 2/6. Transaminase involved in tyrosine breakdown. Converts tyrosine to p-hydroxyphenylpyruvate. Can catalyze the reverse reaction, using glutamic acid, with 2-oxoglutarate as cosubstrate (in vitro). Has much lower affinity and transaminase activity towards phenylalanine. This chain is Tyrosine aminotransferase (TAT), found in Homo sapiens (Human).